A 110-amino-acid chain; its full sequence is Defensin-like protein 296 (110 aa).

The signal sequence occupies residues 1–28 (MASKITIFFVLALVVVCTMMVCIPTATA). Intrachain disulfides connect Cys34–Cys52, Cys40–Cys57, Cys45–Cys59, Cys81–Cys102, Cys87–Cys107, and Cys95–Cys109.

Belongs to the DEFL family.

The protein resides in the secreted. The sequence is that of Defensin-like protein 296 from Arabidopsis thaliana (Mouse-ear cress).